Consider the following 432-residue polypeptide: UDP-N-acetylglucosamine 1-carboxyvinyltransferase (432 aa).

K22 to N23 provides a ligand contact to phosphoenolpyruvate. UDP-N-acetyl-alpha-D-glucosamine is bound at residue R96. Catalysis depends on C120, which acts as the Proton donor. C120 carries the 2-(S-cysteinyl)pyruvic acid O-phosphothioketal modification. UDP-N-acetyl-alpha-D-glucosamine-binding positions include R125 to L129, D310, and I332.

This sequence belongs to the EPSP synthase family. MurA subfamily.

The protein localises to the cytoplasm. The enzyme catalyses phosphoenolpyruvate + UDP-N-acetyl-alpha-D-glucosamine = UDP-N-acetyl-3-O-(1-carboxyvinyl)-alpha-D-glucosamine + phosphate. It participates in cell wall biogenesis; peptidoglycan biosynthesis. Its function is as follows. Cell wall formation. Adds enolpyruvyl to UDP-N-acetylglucosamine. This Caulobacter sp. (strain K31) protein is UDP-N-acetylglucosamine 1-carboxyvinyltransferase.